Consider the following 76-residue polypeptide: Conotoxin Cl6.4 (76 aa).

The first 19 residues, 1-19, serve as a signal peptide directing secretion; the sequence is MTLTFLLVVALCMLTTCHT. The propeptide occupies 20 to 47; it reads ENYRDSQKVSPVRSIGKTQFARSLRLSE. Cystine bridges form between Cys-50-Cys-66, Cys-57-Cys-70, and Cys-65-Cys-75.

As to expression, expressed by the venom duct.

The protein resides in the secreted. The chain is Conotoxin Cl6.4 from Californiconus californicus (California cone).